Consider the following 494-residue polypeptide: MGSTSSLYAAIDLGSNSFHMLVVREVAGSIQTLTRIKRKVRLAAGLNSENALSNEAMERGWQCLRLFAERLQDIPPSQIRVVATATLRLAVNAGDFIAKAQEILGCPVQVISGEEEARLIYQGVAHTTGGADQRLVVDIGGASTELVTGTGAQTTSLFSLSMGCVTWLERYFADRNLGQENFDAAEKAAREVLRPIADELRYHGWKVCVGASGTVQALQEIMMAQGMDERITLEKLQQLKQRAIHCGRLEELEIDGLTLERALVFPSGLAILIAIFTELNIQYMTLAGGALREGLVYGMLHLAVEQDIRSRTLRNIQRRFMIDIDQAQRVAKVAANFFDQVENEWHLEAISRDLLISACQLHEIGLSVDFKQAPQHAAYLVRNLDLPGFTPAQKKLLATLLLNQTNPVDLSSLHQQNAVPPRVAEQLCRLLRLAIIFASRRRDDLVPEMTLQANHELLTLTLPQGWLTQHPLGKEIIAQESQWQSYVHWPLEVH.

This sequence belongs to the GppA/Ppx family. GppA subfamily.

The enzyme catalyses guanosine 3'-diphosphate 5'-triphosphate + H2O = guanosine 3',5'-bis(diphosphate) + phosphate + H(+). It functions in the pathway purine metabolism; ppGpp biosynthesis; ppGpp from GTP: step 2/2. Functionally, catalyzes the conversion of pppGpp to ppGpp. Guanosine pentaphosphate (pppGpp) is a cytoplasmic signaling molecule which together with ppGpp controls the 'stringent response', an adaptive process that allows bacteria to respond to amino acid starvation, resulting in the coordinated regulation of numerous cellular activities. The sequence is that of Guanosine-5'-triphosphate,3'-diphosphate pyrophosphatase from Shigella dysenteriae serotype 1 (strain Sd197).